We begin with the raw amino-acid sequence, 296 residues long: uncharacterized protein (296 aa).

A helical membrane pass occupies residues 1 to 21 (MIFAVVDILEISIQLLCILLF).

The protein resides in the membrane. This is an uncharacterized protein from Caenorhabditis elegans.